Here is a 427-residue protein sequence, read N- to C-terminus: Glucose-6-phosphate isomerase (427 aa).

Glu-277 functions as the Proton donor in the catalytic mechanism. Residues His-298 and Lys-414 contribute to the active site.

The protein belongs to the GPI family.

It localises to the cytoplasm. It catalyses the reaction alpha-D-glucose 6-phosphate = beta-D-fructose 6-phosphate. It functions in the pathway carbohydrate biosynthesis; gluconeogenesis. The protein operates within carbohydrate degradation; glycolysis; D-glyceraldehyde 3-phosphate and glycerone phosphate from D-glucose: step 2/4. Functionally, catalyzes the reversible isomerization of glucose-6-phosphate to fructose-6-phosphate. In Mycoplasma capricolum subsp. capricolum (strain California kid / ATCC 27343 / NCTC 10154), this protein is Glucose-6-phosphate isomerase.